The primary structure comprises 191 residues: Potassium-transporting ATPase KdpC subunit (191 aa).

A helical transmembrane segment spans residues 7–27; sequence ASLVLFLSLTLLTGVAYPLLV.

Belongs to the KdpC family. As to quaternary structure, the system is composed of three essential subunits: KdpA, KdpB and KdpC.

It is found in the cell inner membrane. Its function is as follows. Part of the high-affinity ATP-driven potassium transport (or Kdp) system, which catalyzes the hydrolysis of ATP coupled with the electrogenic transport of potassium into the cytoplasm. This subunit acts as a catalytic chaperone that increases the ATP-binding affinity of the ATP-hydrolyzing subunit KdpB by the formation of a transient KdpB/KdpC/ATP ternary complex. The polypeptide is Potassium-transporting ATPase KdpC subunit (Methylibium petroleiphilum (strain ATCC BAA-1232 / LMG 22953 / PM1)).